Consider the following 131-residue polypeptide: SPbeta prophage-derived UPF0715 membrane protein YopD (131 aa).

4 helical membrane passes run 12 to 32 (VYTL…YLFV), 38 to 58 (AIAL…YLVF), 75 to 95 (LINF…FWFV), and 108 to 128 (FEYY…DSIF).

Belongs to the UPF0715 family.

It is found in the cell membrane. In Bacillus subtilis (strain 168), this protein is SPbeta prophage-derived UPF0715 membrane protein YopD (yopD).